The following is a 378-amino-acid chain: Stimulator of interferon genes protein (378 aa).

Topologically, residues 1 to 17 (MPYSNLHPAIPRPRGHR) are cytoplasmic. The segment at 1-189 (MPYSNLHPAI…MFNQLHNNML (189 aa)) is mediates interaction with ZDHHC1 and ZDHHC11. Residues 18–34 (SKYVALIFLVASLMILW) traverse the membrane as a helical segment. K19 is covalently cross-linked (Glycyl lysine isopeptide (Lys-Gly) (interchain with G-Cter in ubiquitin)). The Lumenal segment spans residues 35–44 (VAKDPPNHTL). A helical membrane pass occupies residues 45-69 (KYLALHLASHELGLLLKNLCCLAEE). Residues 70–91 (LCHVQSRYQGSYWKAVRACLGC) lie on the Cytoplasmic side of the membrane. S-palmitoyl cysteine attachment occurs at residues C88 and C91. The chain crosses the membrane as a helical span at residues 92–106 (PIHCMAMILLSSYFY). At 107–115 (FLQNTADIY) the chain is on the lumenal side. The chain crosses the membrane as a helical span at residues 116 to 133 (LSWMFGLLVLYKSLSMLL). Over 134–378 (GLQSLTPAEV…QPLPLRTDLI (245 aa)) the chain is Cytoplasmic. K150 is covalently cross-linked (Glycyl lysine isopeptide (Lys-Gly) (interchain with G-Cter in ubiquitin)). Residues 152 to 339 (LNVAHGLAWS…RHIRQEEKEE (188 aa)) form a cyclic dinucleotide-binding domain (CBD) region. Residue G165 participates in 3',3'-c-di-GMP binding. Y166 is a binding site for 2',3'-cUAMP. Y166 provides a ligand contact to 3',3'-cGAMP. Residue K235 forms a Glycyl lysine isopeptide (Lys-Gly) (interchain with G-Cter in ubiquitin) linkage. A 2',3'-cUAMP-binding site is contributed by R237. R237 serves as a coordination point for 3',3'-cGAMP. Residue R237 coordinates 2',3'-cGAMP. 3',3'-c-di-GMP contacts are provided by residues 237 to 240 (RVYS) and T262. Residue S240 is modified to Phosphoserine. T262 serves as a coordination point for 2',3'-cUAMP. Position 262 (T262) interacts with 2',3'-cGAMP. Residue K337 forms a Glycyl lysine isopeptide (Lys-Gly) (interchain with G-Cter in SUMO) linkage. The interval 339-378 (EVTMNAPMTSVAPPPSVLSQEPRLLISGMDQPLPLRTDLI) is C-terminal tail (CTT). Phosphoserine; by MAP3K7 is present on S354. Residues S357 and S365 each carry the phosphoserine; by TBK1 modification. Positions 362-365 (LLIS) match the pLxIS motif motif.

This sequence belongs to the STING family. Homodimer; forms a homodimer in absence of cyclic nucleotide (c-di-GMP or cGAMP); 'Lys-63'-linked ubiquitination at Lys-150 is required for homodimerization. Homotetramer; in presence of cyclic nucleotide (c-di-GMP or cGAMP), forms tetramers and higher-order oligomers through side-by-side packing. Interacts (when phosphorylated) with IRF3; following activation and phosphorylation on the pLxIS motif by TBK1, recruits IRF3. Interacts with RIGI, MAVS and SSR2. Interacts with RNF5 and TRIM56. Interacts with TBK1; when homodimer, leading to subsequent production of IFN-beta. Interacts with IFIT1 and IFIT2. Interacts with TRIM29; this interaction induces STING1 ubiquitination and subsequent degradation. Associates with the MHC-II complex. Interacts with STEEP1; interaction takes place upon cGAMP-activation and STING1 phosphorylation by MAP3K7/TAK1 and promotes STING1 translocation to COPII vesicles. Interacts with SEC24A, SEC24B and SEC24C; promoting translocation to COPII vesicles. Interacts (when ubiquitinated) with SQSTM1; leading to relocalization to autophagosomes. Interacts with SURF4. Interacts with HNRNPA2B1. Interacts with ZDHHC1; ZDHHC1 constitutively interacts with STING1 and in presence of DNA viruses activates it by promoting its cGAMP-induced oligomerization and the recruitment of downstream signaling components. Interacts with ZDHHC11; in presence of DNA viruses promotes the recruitment of IRF3 to STING1. Interacts with TOMM70. Interacts with IFI204. Interacts with TAB1; promoting recruitment of TAB1 to the endoplasmic reticulum membrane and subsequent activation of MAP3K7/TAK1. Interacts (via transmembrane domain) with TMEM203. Interacts with DDX41. Phosphorylation by TBK1 leads to activation and production of IFN-beta. Following cyclic nucleotide (c-di-GMP or cGAMP)-binding, activation and translocation from the endoplasmic reticulum, STING1 is phosphorylated by TBK1 at Ser-365 in the pLxIS motif. The phosphorylated pLxIS motif constitutes an IRF3-binding motif, leading to recruitment of the transcription factor IRF3 to induce type-I interferons and other cytokines. The phosphorylated pLxIS motif facilitates SENP2 recruitment during late phase of viral infection. Phosphorylated on tyrosine residues upon MHC-II aggregation. Dephosphorylation by PPP6C leads to inactivation and decreased production of IFN-beta. Phosphorylation at Ser-357 is also required to activate IRF3. Phosphorylation at Ser-354 by MAP3K7/TAK1 facilitates its interaction with STEEP1, promoting STING1 translocation to COPII vesicles. In terms of processing, ubiquitinated. Ubiquitinated via 'Lys-63'-linked ubiquitin chains in response to double-stranded DNA treatment, leading to relocalization to autophagosomes and subsequent degradation; this process is dependent on SQSTM1. 'Lys-63'-linked ubiquitination mediated by TRIM56 at Lys-150 promotes homodimerization and recruitment of the antiviral kinase TBK1 and subsequent production of IFN-beta. 'Lys-48'-linked polyubiquitination at Lys-150 occurring after viral infection is mediated by RNF5 and leads to proteasomal degradation. 'Lys-11'-linked polyubiquitination at Lys-150 by RNF26 leads to stabilize STING1: it protects STING1 from RNF5-mediated 'Lys-48'-linked polyubiquitination. 'Lys-33'-linked and 'Lys-48'-linked deubiquitinated by USP20; leading to its stabilization and promotion of innate antiviral response. 'Lys-48'-linked deubiquitinated by USP44; leading to its stabilization and promotion of innate antiviral response. Deubiquitinated by USP13; leading to inhibition of innate antiviral response. 'Lys-63'-linked deubiquitinated by USP49; leading to inhibition of the subsequent recruitment of TBK1 to the signaling complex. 'Lys-63'-linked ubiquitination mediated by RNF39 promotes the activation of the cGAS-STING pathway. MARCHF5-mediated ubiquitination prevents the oxidation-induced polymer formation. Post-translationally, sumoylated at Lys-337 by TRIM38 during the early phase of viral infection, promoting its stability by preventing its relocalization to autophagosomes and subsequent degradation. Desumoylated by SENP2 during the late phase of viral infection. Palmitoylation takes place in the Golgi apparatus and creates a platform for the recruitment of TBK1. In terms of tissue distribution, present in spleen and thymus tissue. Also present in dendritic cells (at protein level).

It is found in the endoplasmic reticulum membrane. The protein resides in the cytoplasm. The protein localises to the perinuclear region. It localises to the endoplasmic reticulum-Golgi intermediate compartment membrane. Its subcellular location is the golgi apparatus membrane. It is found in the cytoplasmic vesicle. The protein resides in the autophagosome membrane. The protein localises to the mitochondrion outer membrane. It localises to the cell membrane. Its subcellular location is the lysosome membrane. It catalyses the reaction H(+)(in) = H(+)(out). Activated by anticancer drug 5,6-dimethylxanthenone 4-acetic acid (DMXAA). Specifically inhibited by nitrofuran derivatives C-178 and C-176, which covalently bind Cys-91 and prevent palmitoylation and subsequent activation od STING1. In terms of biological role, facilitator of innate immune signaling that acts as a sensor of cytosolic DNA from bacteria and viruses and promotes the production of type I interferon (IFN-alpha and IFN-beta). Innate immune response is triggered in response to non-CpG double-stranded DNA from viruses and bacteria delivered to the cytoplasm. Acts by binding cyclic dinucleotides: recognizes and binds cyclic di-GMP (c-di-GMP), a second messenger produced by bacteria, cyclic UMP-AMP (2',3'-cUAMP), and cyclic GMP-AMP (cGAMP), a messenger produced by CGAS in response to DNA virus in the cytosol. Upon binding to c-di-GMP, cUAMP or cGAMP, STING1 oligomerizes, translocates from the endoplasmic reticulum and is phosphorylated by TBK1 on the pLxIS motif, leading to recruitment and subsequent activation of the transcription factor IRF3 to induce expression of type I interferon and exert a potent anti-viral state. Exhibits 2',3' phosphodiester linkage-specific ligand recognition: can bind both 2'-3' linked cGAMP (2'-3'-cGAMP) and 3'-3' linked cGAMP but is preferentially activated by 2'-3' linked cGAMP. The preference for 2'-3'-cGAMP, compared to other linkage isomers is probably due to the ligand itself, whichs adopts an organized free-ligand conformation that resembles the STING1-bound conformation and pays low energy costs in changing into the active conformation. In addition to promote the production of type I interferons, plays a direct role in autophagy. Following cGAMP-binding, STING1 buds from the endoplasmic reticulum into COPII vesicles, which then form the endoplasmic reticulum-Golgi intermediate compartment (ERGIC). The ERGIC serves as the membrane source for WIPI2 recruitment and LC3 lipidation, leading to formation of autophagosomes that target cytosolic DNA or DNA viruses for degradation by the lysosome. Promotes autophagy by acting as a proton channel that directs proton efflux from the Golgi to facilitate MAP1LC3B/LC3B lipidation. The autophagy- and interferon-inducing activities can be uncoupled and autophagy induction is independent of TBK1 phosphorylation. Autophagy is also triggered upon infection by bacteria: following c-di-GMP-binding, which is produced by live Gram-positive bacteria, promotes reticulophagy. May be involved in translocon function, the translocon possibly being able to influence the induction of type I interferons. May be involved in transduction of apoptotic signals via its association with the major histocompatibility complex class II (MHC-II). The chain is Stimulator of interferon genes protein from Mus musculus (Mouse).